Reading from the N-terminus, the 494-residue chain is E3 ubiquitin-protein ligase ari-1.1 (494 aa).

The span at 1 to 30 (MSSDDEINMDDSDSSQGEIDDGCMSDDDGI) shows a compositional bias: acidic residues. Positions 1 to 52 (MSSDDEINMDDSDSSQGEIDDGCMSDDDGIVLESREQNSSDYKDNGEPDNEV) are disordered. Positions 33 to 52 (ESREQNSSDYKDNGEPDNEV) are enriched in basic and acidic residues. Residues 124-331 (GDAECDICCS…SSWYSCNRFD (208 aa)) are TRIAD supradomain. The Zn(2+) site is built by C128, C131, C142, H144, C147, C150, C169, C174, C214, C219, C235, C237, C242, C245, H250, C255, C282, and C285. An RING-type 1 zinc finger spans residues 128–174 (CDICCSLGELSGLSCNHRACTQCWKAYLTNKIANNAQSEIECMAPNC). Residues 194 to 255 (ATYRKLIVAS…GHDWHEPVNC (62 aa)) form an IBR-type zinc finger. Residues 282–313 (CPKCMITIEKDGGCNHMTCKNTACRFEFCWMC) form an RING-type 2; atypical zinc finger. C295 is an active-site residue. Zn(2+) is bound by residues C300, C305, C310, C313, H320, and C327. The segment at 346-494 (RANLQRYLFY…ADQELWVFNE (149 aa)) is ariadne domain.

The protein belongs to the RBR family. Ariadne subfamily. As to quaternary structure, interacts with ubiquitin-conjugating enzyme E2 ubc-18.

The protein resides in the nucleus. Its subcellular location is the cytoplasm. The catalysed reaction is [E2 ubiquitin-conjugating enzyme]-S-ubiquitinyl-L-cysteine + [acceptor protein]-L-lysine = [E2 ubiquitin-conjugating enzyme]-L-cysteine + [acceptor protein]-N(6)-ubiquitinyl-L-lysine.. Autoinhibited by the ariadne domain, which masks the second RING-type zinc finger that contains the active site and inhibits the E3 activity. Functionally, E3 ubiquitin-protein transferase, which catalyzes ubiquitination of target proteins together with ubiquitin-conjugating enzyme E2 ubc-18. Acts with ubc-18 to regulate pharyngeal development. This is E3 ubiquitin-protein ligase ari-1.1 from Caenorhabditis elegans.